The primary structure comprises 191 residues: Protein Ves (191 aa).

The protein belongs to the Ves family.

This Shigella flexneri serotype 5b (strain 8401) protein is Protein Ves.